Consider the following 833-residue polypeptide: Ribosome biogenesis protein BOP1 homolog (833 aa).

Residues asparagine 20–serine 202 are disordered. Residues serine 36 to threonine 56 show a composition bias toward low complexity. Composition is skewed to acidic residues over residues serine 90–glutamate 111 and glutamate 136–serine 150. Residues serine 154–lysine 170 are compositionally biased toward low complexity. The segment covering lysine 182–tyrosine 192 has biased composition (polar residues). A compositionally biased stretch (acidic residues) spans aspartate 193 to serine 202. WD repeat units lie at residues threonine 331 to threonine 370, glycine 488 to serine 527, and glutamate 529 to glutamate 569. The segment at threonine 568–asparagine 592 is disordered. The segment covering proline 582–asparagine 592 has biased composition (polar residues). WD repeat units follow at residues histidine 618–proline 660, lysine 663–lysine 701, threonine 704–lysine 743, tyrosine 747–glutamine 786, and isoleucine 802–asparagine 833.

This sequence belongs to the WD repeat BOP1/ERB1 family.

The protein localises to the nucleus. The protein resides in the nucleolus. Its subcellular location is the nucleoplasm. In terms of biological role, required for maturation of ribosomal RNAs and formation of the large ribosomal subunit. The protein is Ribosome biogenesis protein BOP1 homolog of Dictyostelium discoideum (Social amoeba).